A 468-amino-acid chain; its full sequence is Chromosomal replication initiator protein DnaA (468 aa).

The domain I, interacts with DnaA modulators stretch occupies residues 1-84 (MSSSLWLQCL…RFEVGSRPVS (84 aa)). A disordered region spans residues 80–106 (SRPVSAPKPAPTRTPADVAAESSAPAQ). The tract at residues 84–131 (SAPKPAPTRTPADVAAESSAPAQLQARKPVHKTWDDDPQAIAAINHRS) is domain II. Residues 132–348 (NMNPKHKFDN…GALNRVIANA (217 aa)) are domain III, AAA+ region. Residues Gly176, Gly178, Lys179, and Thr180 each contribute to the ATP site. The domain IV, binds dsDNA stretch occupies residues 349-468 (NFTGRPITID…YSNLIRTLSS (120 aa)).

This sequence belongs to the DnaA family. In terms of assembly, oligomerizes as a right-handed, spiral filament on DNA at oriC.

Its subcellular location is the cytoplasm. In terms of biological role, plays an essential role in the initiation and regulation of chromosomal replication. ATP-DnaA binds to the origin of replication (oriC) to initiate formation of the DNA replication initiation complex once per cell cycle. Binds the DnaA box (a 9 base pair repeat at the origin) and separates the double-stranded (ds)DNA. Forms a right-handed helical filament on oriC DNA; dsDNA binds to the exterior of the filament while single-stranded (ss)DNA is stabiized in the filament's interior. The ATP-DnaA-oriC complex binds and stabilizes one strand of the AT-rich DNA unwinding element (DUE), permitting loading of DNA polymerase. After initiation quickly degrades to an ADP-DnaA complex that is not apt for DNA replication. Binds acidic phospholipids. The sequence is that of Chromosomal replication initiator protein DnaA from Vibrio parahaemolyticus serotype O3:K6 (strain RIMD 2210633).